Consider the following 577-residue polypeptide: Jasmonoyl--L-amino acid synthetase JAR4 (577 aa).

Residue serine 99 participates in ATP binding. Serine 102 provides a ligand contact to jasmonate. ATP-binding positions include methionine 119, threonine 122, glycine 163, asparagine 168, and 331–336; that span reads GSSEGW. 166-170 provides a ligand contact to an L-alpha-amino acid; the sequence is TTNVY. Residue 328–331 participates in jasmonate binding; the sequence is ADYG. 531-535 provides a ligand contact to an L-alpha-amino acid; that stretch reads KILDH.

The protein belongs to the IAA-amido conjugating enzyme family.

It carries out the reaction a jasmonate + an L-alpha-amino acid + ATP = a jasmonyl-L-amino acid + AMP + diphosphate + H(+). Functionally, catalyzes the synthesis of jasmonate-amino acid conjugates by adenylation. Catalyzes the conjugation of jasmonate (JA) to Ile, Leu and Val. Catalyzes the conjugation of jasmonate (JA) to Ile to mediate defense signaling and resistance to the herbivore Manduca sexta caterpillars. The protein is Jasmonoyl--L-amino acid synthetase JAR4 of Nicotiana attenuata (Coyote tobacco).